We begin with the raw amino-acid sequence, 201 residues long: Single-stranded DNA-binding protein, mitochondrial (201 aa).

One can recognise an SSB domain in the interval 71-184 (VHRAIICGKV…RDGKIRMIKY (114 aa)).

The protein resides in the mitochondrion. In terms of biological role, binds to ss-DNA. In Arabidopsis thaliana (Mouse-ear cress), this protein is Single-stranded DNA-binding protein, mitochondrial.